Consider the following 72-residue polypeptide: Cell division protein ZapB (72 aa).

Residues 2–72 (SLEILDQLEG…RSLLGQIDNV (71 aa)) adopt a coiled-coil conformation. Residues 34–57 (NQQAQQANDELRSENEQLKGEHNN) are disordered. Residues 42–57 (DELRSENEQLKGEHNN) show a composition bias toward basic and acidic residues.

Belongs to the ZapB family. In terms of assembly, homodimer. The ends of the coiled-coil dimer bind to each other, forming polymers. Interacts with FtsZ.

It is found in the cytoplasm. In terms of biological role, non-essential, abundant cell division factor that is required for proper Z-ring formation. It is recruited early to the divisome by direct interaction with FtsZ, stimulating Z-ring assembly and thereby promoting cell division earlier in the cell cycle. Its recruitment to the Z-ring requires functional FtsA or ZipA. The sequence is that of Cell division protein ZapB from Mannheimia succiniciproducens (strain KCTC 0769BP / MBEL55E).